The primary structure comprises 142 residues: ATP synthase epsilon chain (142 aa).

This sequence belongs to the ATPase epsilon chain family. In terms of assembly, F-type ATPases have 2 components, CF(1) - the catalytic core - and CF(0) - the membrane proton channel. CF(1) has five subunits: alpha(3), beta(3), gamma(1), delta(1), epsilon(1). CF(0) has three main subunits: a, b and c.

It is found in the cell inner membrane. Functionally, produces ATP from ADP in the presence of a proton gradient across the membrane. This is ATP synthase epsilon chain from Shewanella baltica (strain OS155 / ATCC BAA-1091).